A 265-amino-acid chain; its full sequence is Glutamate racemase (265 aa).

Residues 9–10 and 41–42 each bind substrate; these read DS and YS. Catalysis depends on Cys-73, which acts as the Proton donor/acceptor. 74–75 contacts substrate; it reads NT. Cys-184 acts as the Proton donor/acceptor in catalysis. Residue 185–186 participates in substrate binding; it reads TH.

Belongs to the aspartate/glutamate racemases family.

It catalyses the reaction L-glutamate = D-glutamate. It participates in cell wall biogenesis; peptidoglycan biosynthesis. Its function is as follows. Provides the (R)-glutamate required for cell wall biosynthesis. In Actinobacillus pleuropneumoniae serotype 5b (strain L20), this protein is Glutamate racemase.